Reading from the N-terminus, the 372-residue chain is 4-hydroxy-3-methylbut-2-en-1-yl diphosphate synthase (flavodoxin) (372 aa).

[4Fe-4S] cluster is bound by residues Cys-270, Cys-273, Cys-305, and Glu-312.

The protein belongs to the IspG family. Requires [4Fe-4S] cluster as cofactor.

The catalysed reaction is (2E)-4-hydroxy-3-methylbut-2-enyl diphosphate + oxidized [flavodoxin] + H2O + 2 H(+) = 2-C-methyl-D-erythritol 2,4-cyclic diphosphate + reduced [flavodoxin]. It functions in the pathway isoprenoid biosynthesis; isopentenyl diphosphate biosynthesis via DXP pathway; isopentenyl diphosphate from 1-deoxy-D-xylulose 5-phosphate: step 5/6. Functionally, converts 2C-methyl-D-erythritol 2,4-cyclodiphosphate (ME-2,4cPP) into 1-hydroxy-2-methyl-2-(E)-butenyl 4-diphosphate. In Shewanella amazonensis (strain ATCC BAA-1098 / SB2B), this protein is 4-hydroxy-3-methylbut-2-en-1-yl diphosphate synthase (flavodoxin).